A 450-amino-acid polypeptide reads, in one-letter code: Glutamate--tRNA ligase 2 (450 aa).

A 'HIGH' region motif is present at residues 10–20 (PSPTGRIHIGN). The 'KMSKS' region motif lies at 243 to 247 (GFSKR). Lysine 246 provides a ligand contact to ATP.

The protein belongs to the class-I aminoacyl-tRNA synthetase family. Glutamate--tRNA ligase type 1 subfamily. In terms of assembly, monomer.

It localises to the cytoplasm. It catalyses the reaction tRNA(Glu) + L-glutamate + ATP = L-glutamyl-tRNA(Glu) + AMP + diphosphate. In terms of biological role, catalyzes the attachment of glutamate to tRNA(Glu) in a two-step reaction: glutamate is first activated by ATP to form Glu-AMP and then transferred to the acceptor end of tRNA(Glu). In Beijerinckia indica subsp. indica (strain ATCC 9039 / DSM 1715 / NCIMB 8712), this protein is Glutamate--tRNA ligase 2.